The chain runs to 1935 residues: Myosin-7 (1935 aa).

The Myosin N-terminal SH3-like domain maps to 32–81 (DLKKDVYVPDDKEEFVKAKILSREGGKVTAETEHGKTVTVKEDQVLQQNP). The Myosin motor domain maps to 85-778 (DKIEDMAMLT…LLGLLEEMRD (694 aa)). An N6,N6,N6-trimethyllysine modification is found at lysine 129. An ATP-binding site is contributed by 178-185 (GESGAGKT). Phosphothreonine is present on threonine 378. Actin-binding stretches follow at residues 655 to 677 (LNKL…IPNE) and 757 to 771 (KFGH…GLLG). Residues 781–810 (LSRIITRIQAQSRGVLSRMEFKKLLERRDS) enclose the IQ domain. Positions 839–1935 (LLKSAETEKE…DIGTKGLNEE (1097 aa)) form a coiled coil. A phosphoserine mark is found at serine 1137 and serine 1269. Threonine 1282 is subject to Phosphothreonine. Tyrosine 1308 is modified (phosphotyrosine). Threonine 1309 is modified (phosphothreonine). At serine 1510 the chain carries Phosphoserine. Phosphothreonine is present on threonine 1513. Positions 1907–1935 (EERADIAESQVNKLRAKSRDIGTKGLNEE) are disordered. Basic and acidic residues predominate over residues 1923–1935 (KSRDIGTKGLNEE).

Belongs to the TRAFAC class myosin-kinesin ATPase superfamily. Myosin family. Muscle myosin is a hexameric protein that consists of 2 heavy chain subunits (MHC), 2 alkali light chain subunits (MLC) and 2 regulatory light chain subunits (MLC-2). Interacts with ECPAS. Interacts (via C-terminus) with LRRC39.

The protein resides in the cytoplasm. The protein localises to the myofibril. It is found in the sarcomere. Its function is as follows. Myosins are actin-based motor molecules with ATPase activity essential for muscle contraction. Forms regular bipolar thick filaments that, together with actin thin filaments, constitute the fundamental contractile unit of skeletal and cardiac muscle. This is Myosin-7 (MYH7) from Sus scrofa (Pig).